Here is a 419-residue protein sequence, read N- to C-terminus: Structure-specific endonuclease subunit slx4 (419 aa).

The protein belongs to the SLX4 family. In terms of assembly, forms a heterodimer with slx1. In terms of processing, phosphorylated in response to DNA damage.

It is found in the nucleus. Its subcellular location is the nucleolus. Functionally, regulatory subunit of the slx1-slx4 structure-specific endonuclease that resolves DNA secondary structures generated during DNA repair and recombination. Has endonuclease activity towards branched DNA substrates, introducing single-strand cuts in duplex DNA close to junctions with ss-DNA. Has a preference for stem-loop (SL) and splayed arm Y structures. Introduces a single-strand cut in duplex DNA on the 3' side of a double-strand/single-strand junction with respect to the single-strand moving 3' to 5' away from the junction. Plays a critical role in maintaining the integrity of the ribosomal DNA (rDNA) loci, where it has a role in re-starting stalled replication forks. The complex initiates homologous recombination (HR) events, used to maintain rDNA copy number, in the rDNA repeats that are processed by a mechanism that requires rad22, but not rhp51. Has Holliday junction resolvase activity in vitro. Slx4 is required for efficient processing of DNA substrates. The sequence is that of Structure-specific endonuclease subunit slx4 from Schizosaccharomyces pombe (strain 972 / ATCC 24843) (Fission yeast).